A 200-amino-acid chain; its full sequence is Nucleoplasmin (200 aa).

Ala2 bears the N-acetylalanine mark. Ser3 is modified (phosphoserine). Phosphothreonine is present on Thr4. Ser6 bears the Phosphoserine mark. Position 8 is a phosphothreonine (Thr8). An acidic tract A1 region spans residues 35-39 (EDDEE). Acidic residues predominate over residues 123-148 (DYSWAEEEDEGEAEGEEEEEEEEDQE). Residues 123–200 (DYSWAEEEDE…GRGRKPAAKK (78 aa)) are disordered. Positions 128–148 (EEEDEGEAEGEEEEEEEEDQE) are acidic tract A2. The residue at position 149 (Ser149) is a Phosphoserine. Residues 153–170 (AVKRPAATKKAGQAKKKK) are compositionally biased toward basic residues. A Bipartite nuclear localization signal motif is present at residues 155–170 (KRPAATKKAGQAKKKK). The segment at 174 to 176 (EDE) is acidic tract A3. Ser177, Ser178, and Ser182 each carry phosphoserine. The span at 185–200 (KKGKGAGRGRKPAAKK) shows a compositional bias: basic residues. Arg192 is subject to Omega-N-methylarginine; by PRMT5; alternate. Arg192 carries the symmetric dimethylarginine; by PRMT5; alternate modification.

The protein belongs to the nucleoplasmin family. As to quaternary structure, homopentamer, when bound to H2A-H2B dimers only. Homodecamer of two stacked pentamers, when bound to H2A-H2B dimers and H3-H4 tetramers simultaneously. Interacts with the heterotetramer formed by wdr77 and prmt5. Activated by phosphorylation of multiple serine/threonine residues, along both core and tail domains. The level of phosphorylation gradually increases during egg maturation, reaching an average of 7-10 phosphates per monomer, so that at the time of fertilization the activity of the protein is maximum. Post-translationally, methylated by prmt5, yielding both monomethylated and symmetrically dimethylated Arg-192.

Its subcellular location is the nucleus. In terms of biological role, acts as a chaperone for histones, such as histone H2A-H2B, and thus regulates the assembly of nucleosome cores. Involved in chromatin remodeling, especially during fertilization and early embryonic development. May be involved in sperm chromatin decondensation during fertilization. The sequence is that of Nucleoplasmin from Xenopus laevis (African clawed frog).